A 553-amino-acid chain; its full sequence is Putative transport protein PM1071 (553 aa).

The next 5 helical transmembrane spans lie at 4–24 (IAITISLLALVAVIGLWIGHW), 28–48 (GVGLGIGGVLFGGIIVAHFTN), 65–85 (FGLILFVYTIGIQVGPGFFAS), 91–111 (LKLNGFAALIVLLGSLAVIVI), and 157–177 (MAYAMAYPFGICGILLSMWLI). RCK C-terminal domains lie at 190-276 (KNFL…VLGE) and 277-361 (EVDV…ILGN). The next 6 membrane-spanning stretches (helical) occupy residues 371 to 391 (MLPVFIGIGLGVLLGSIPFHI), 403 to 425 (AGGPLVVALILARIGSIGKLYWF), 439 to 459 (IVLFLAVVGLKSGGNFVDTLV), 464 to 484 (LEWMVYGIFITFVPLMIVGIV), 496 to 516 (LCGLLAGSMTDPPALAFANAI), and 533 to 553 (LVMFLRIISPQLLAILLWTLL).

The protein belongs to the AAE transporter (TC 2.A.81) family. YidE subfamily.

It is found in the cell membrane. The protein is Putative transport protein PM1071 of Pasteurella multocida (strain Pm70).